The following is a 202-amino-acid chain: Glycerol-3-phosphate acyltransferase (202 aa).

The next 5 membrane-spanning stretches (helical) occupy residues 3 to 23 (ILLA…VVVS), 51 to 71 (KAAI…VWLV), 74 to 94 (FGIG…LGHL), 116 to 136 (AVHP…AFFF), and 140 to 160 (SLAA…LFGT).

It belongs to the PlsY family. Probably interacts with PlsX.

The protein localises to the cell inner membrane. The catalysed reaction is an acyl phosphate + sn-glycerol 3-phosphate = a 1-acyl-sn-glycero-3-phosphate + phosphate. It participates in lipid metabolism; phospholipid metabolism. Its function is as follows. Catalyzes the transfer of an acyl group from acyl-phosphate (acyl-PO(4)) to glycerol-3-phosphate (G3P) to form lysophosphatidic acid (LPA). This enzyme utilizes acyl-phosphate as fatty acyl donor, but not acyl-CoA or acyl-ACP. The protein is Glycerol-3-phosphate acyltransferase of Burkholderia thailandensis (strain ATCC 700388 / DSM 13276 / CCUG 48851 / CIP 106301 / E264).